Reading from the N-terminus, the 440-residue chain is Histidinol dehydrogenase (440 aa).

Residues tyrosine 139, glutamine 200, and asparagine 223 each coordinate NAD(+). Positions 246, 268, and 271 each coordinate substrate. Zn(2+)-binding residues include glutamine 268 and histidine 271. Active-site proton acceptor residues include glutamate 336 and histidine 337. Residues histidine 337, aspartate 370, glutamate 424, and histidine 429 each contribute to the substrate site. Zn(2+) is bound at residue aspartate 370. Histidine 429 provides a ligand contact to Zn(2+).

It belongs to the histidinol dehydrogenase family. The cofactor is Zn(2+).

The catalysed reaction is L-histidinol + 2 NAD(+) + H2O = L-histidine + 2 NADH + 3 H(+). Its pathway is amino-acid biosynthesis; L-histidine biosynthesis; L-histidine from 5-phospho-alpha-D-ribose 1-diphosphate: step 9/9. Catalyzes the sequential NAD-dependent oxidations of L-histidinol to L-histidinaldehyde and then to L-histidine. This Bordetella bronchiseptica (strain ATCC BAA-588 / NCTC 13252 / RB50) (Alcaligenes bronchisepticus) protein is Histidinol dehydrogenase.